Consider the following 254-residue polypeptide: Large ribosomal subunit protein uL2 (254 aa).

This sequence belongs to the universal ribosomal protein uL2 family.

The sequence is that of Large ribosomal subunit protein uL2 (RPL2) from Candida glabrata (strain ATCC 2001 / BCRC 20586 / JCM 3761 / NBRC 0622 / NRRL Y-65 / CBS 138) (Yeast).